A 699-amino-acid chain; its full sequence is Ciliated left-right organizer metallopeptidase (699 aa).

Residues 1–18 form the signal peptide; sequence MKMWRLLLLGVATGRCLH. Residues 19-663 are Extracellular-facing; sequence EETQKSVRLL…SLDHNPSMTE (645 aa). His-238 serves as a coordination point for Zn(2+). Residue Glu-239 is part of the active site. Residues His-242 and His-318 each contribute to the Zn(2+) site. A helical transmembrane segment spans residues 664 to 684; that stretch reads LLLSTGFCLLVLILVGALGTL. The Cytoplasmic portion of the chain corresponds to 685–699; that stretch reads AYQKRAMLQVAPSTT.

This sequence belongs to the peptidase M8 family. It depends on Zn(2+) as a cofactor. Specifically expressed in ciliated left-right organizer.

It is found in the membrane. In terms of biological role, putative metalloproteinase that plays a role in left-right patterning process. The protein is Ciliated left-right organizer metallopeptidase of Mus musculus (Mouse).